Consider the following 493-residue polypeptide: Glutamyl-tRNA(Gln) amidotransferase subunit A (493 aa).

Catalysis depends on charge relay system residues Lys78 and Ser158. The active-site Acyl-ester intermediate is Ser182.

Belongs to the amidase family. GatA subfamily. In terms of assembly, heterotrimer of A, B and C subunits.

The catalysed reaction is L-glutamyl-tRNA(Gln) + L-glutamine + ATP + H2O = L-glutaminyl-tRNA(Gln) + L-glutamate + ADP + phosphate + H(+). In terms of biological role, allows the formation of correctly charged Gln-tRNA(Gln) through the transamidation of misacylated Glu-tRNA(Gln) in organisms which lack glutaminyl-tRNA synthetase. The reaction takes place in the presence of glutamine and ATP through an activated gamma-phospho-Glu-tRNA(Gln). The sequence is that of Glutamyl-tRNA(Gln) amidotransferase subunit A from Rickettsia rickettsii (strain Iowa).